The sequence spans 267 residues: Phosphoethanolamine/phosphocholine phosphatase (267 aa).

Aspartate 32 (nucleophile) is an active-site residue. Mg(2+) is bound by residues aspartate 32 and aspartate 34. Aspartate 34 acts as the Proton donor in catalysis. Substrate contacts are provided by aspartate 43 and aspartate 123. Aspartate 203 is a binding site for Mg(2+).

This sequence belongs to the HAD-like hydrolase superfamily. PHOSPHO family. Mg(2+) is required as a cofactor. Expressed at sites of mineralization in bone and cartilage. Highly expressed in osteoblast cell line SaOS-2 which produces a mineralized matrix, but not in MG-63 cell line, which do not mineralize.

The protein localises to the extracellular vesicle. It carries out the reaction phosphoethanolamine + H2O = ethanolamine + phosphate. It catalyses the reaction phosphocholine + H2O = choline + phosphate. In terms of biological role, phosphatase that has a high activity toward phosphoethanolamine (PEA) and phosphocholine (PCho). Involved in the generation of inorganic phosphate for bone mineralization. Acts in a non-redundant manner with PHOSPHO1 in skeletal mineralization: while PHOSPHO1 mediates the initiation of hydroxyapatite crystallization in the matrix vesicles (MVs), ALPL/TNAP catalyzes the spread of hydroxyapatite crystallization in the extracellular matrix. The chain is Phosphoethanolamine/phosphocholine phosphatase from Homo sapiens (Human).